The chain runs to 418 residues: Hepatic and glial cell adhesion molecule (418 aa).

An N-terminal signal peptide occupies residues 1-33 (MKRERGALSRASRALRLSPFVYLLLIQPVPLEG). The Ig-like V-type domain occupies 34–142 (VNITSPVRLI…GEKTINLTVD (109 aa)). Residues 34–240 (VNITSPVRLI…VKITVYRRSS (207 aa)) are Extracellular-facing. N-linked (GlcNAc...) asparagine glycans are attached at residues asparagine 35, asparagine 138, asparagine 167, and asparagine 189. Positions 148 to 234 (PQVLVASTTV…QVRSLPVKIT (87 aa)) constitute an Ig-like C2-type domain. The cysteines at positions 168 and 217 are disulfide-linked. The chain crosses the membrane as a helical span at residues 241–261 (LYIILSTGGIFLLVTLVTVCA). At 262-418 (CWKPSKKSRK…DESGQVEISA (157 aa)) the chain is on the cytoplasmic side. The disordered stretch occupies residues 271–418 (KKRKLEKQNS…DESGQVEISA (148 aa)). At serine 280 the chain carries Phosphoserine. Residues 287–308 (NDDRLKSEADTLPRSGEQERKN) show a composition bias toward basic and acidic residues. Phosphoserine occurs at positions 321, 352, and 379. Residues 341–358 (GYSVSPPVPGRSPGLPIR) are compositionally biased toward low complexity. Residues 385–396 (SSPGRSRSSSRS) are compositionally biased toward low complexity.

Homodimer. Dimer formation occurs predominantly through cis interactions on the cell surface. Part of a complex containing MLC1, TRPV4, AQP4 and ATP1B1. Interacts with CLCN2. N-glycosylated.

The protein resides in the cytoplasm. It is found in the cell membrane. Involved in regulating cell motility and cell-matrix interactions. May inhibit cell growth through suppression of cell proliferation. In glia, associates and targets CLCN2 at astrocytic processes and myelinated fiber tracts where it may regulate transcellular chloride flux involved in neuron excitability. The polypeptide is Hepatic and glial cell adhesion molecule (Mus musculus (Mouse)).